The following is a 182-amino-acid chain: MTIPQSPTTEDIVAALRNADAVQYGEFELSHGGTSAYYIDKYLFETDPKCLQIIASAFADRINETTLAGVALGAVPLVAVTSTVAGQPYVVVRKKAKKYGTGNRIEGRLNEDEEVVVLEDIATTGTSAVEAVNALRDVGATVERVFVVVDRQEGAREQLESNNVEMEALVTATDLLVDDENV.

5-phospho-alpha-D-ribose 1-diphosphate is bound by residues R93, K94, K97, and 119–127 (EDIATTGTS). T123 and R151 together coordinate orotate.

Belongs to the purine/pyrimidine phosphoribosyltransferase family. PyrE subfamily. Homodimer. Requires Mg(2+) as cofactor.

It carries out the reaction orotidine 5'-phosphate + diphosphate = orotate + 5-phospho-alpha-D-ribose 1-diphosphate. The protein operates within pyrimidine metabolism; UMP biosynthesis via de novo pathway; UMP from orotate: step 1/2. Its function is as follows. Catalyzes the transfer of a ribosyl phosphate group from 5-phosphoribose 1-diphosphate to orotate, leading to the formation of orotidine monophosphate (OMP). The polypeptide is Orotate phosphoribosyltransferase (Haloquadratum walsbyi (strain DSM 16790 / HBSQ001)).